A 211-amino-acid polypeptide reads, in one-letter code: LexA repressor (211 aa).

The segment at residues 30–50 is a DNA-binding region (H-T-H motif); that stretch reads RVEIAREIGFKSPNAAEEHLK. Active-site for autocatalytic cleavage activity residues include S128 and K165.

The protein belongs to the peptidase S24 family. Homodimer.

The catalysed reaction is Hydrolysis of Ala-|-Gly bond in repressor LexA.. In terms of biological role, represses a number of genes involved in the response to DNA damage (SOS response), including recA and lexA. In the presence of single-stranded DNA, RecA interacts with LexA causing an autocatalytic cleavage which disrupts the DNA-binding part of LexA, leading to derepression of the SOS regulon and eventually DNA repair. This is LexA repressor from Haemophilus ducreyi (strain 35000HP / ATCC 700724).